The primary structure comprises 258 residues: (S)-hydroxynitrile lyase (258 aa).

The AB hydrolase-1 domain maps to 5-242 (HFVLIHTICH…GGDHKLQLTK (238 aa)). Residues Thr-11 and Ser-80 each contribute to the 2-hydroxy-2-methylpropanenitrile site. The acetone site is built by Thr-11, Ser-80, and Cys-81. Ser-80 acts as the Proton donor/acceptor in catalysis. His-236 acts as the Proton donor/acceptor in catalysis.

The protein belongs to the AB hydrolase superfamily. Hydroxynitrile lyase family. Homotetramer.

It carries out the reaction a monosubstituted aliphatic (S)-hydroxynitrile = an aldehyde + hydrogen cyanide. The enzyme catalyses a disubstituted aliphatic (S)-hydroxynitrile = a ketone + hydrogen cyanide. The catalysed reaction is an aromatic (S)-hydroxynitrile = an aromatic aldehyde + hydrogen cyanide. It catalyses the reaction 2-hydroxy-2-methylpropanenitrile = acetone + hydrogen cyanide. It carries out the reaction butan-2-one + hydrogen cyanide = 2-hydroxy-2-methylbutanenitrile. The enzyme catalyses pentan-2-one + hydrogen cyanide = (2S)-2-hydroxy-2-methylpentanenitrile. The catalysed reaction is hexan-2-one + hydrogen cyanide = (2S)-2-hydroxy-2-methylhexanenitrile. It catalyses the reaction heptan-2-one + hydrogen cyanide = (2S)-2-hydroxy-2-methylheptanenitrile. It carries out the reaction 4-methylpentan-2-one + hydrogen cyanide = (2S)-2-hydroxy-2,4-dimethylpentanenitrile. The enzyme catalyses 3,3-dimethylbutan-2-one + hydrogen cyanide = (2S)-2-hydroxy-2-methyl-3,3-dimethylbutanenitrile. The catalysed reaction is acetophenone + hydrogen cyanide = (2S)-2-hydroxy-2-phenylpropanenitrile. It catalyses the reaction propanal + hydrogen cyanide = (2S)-2-hydroxybutanenitrile. It carries out the reaction pentanal + hydrogen cyanide = (2S)-2-hydroxyhexanenitrile. The enzyme catalyses 2-methylpropanal + hydrogen cyanide = (2S)-2-hydroxy-3-methylbutanenitrile. The catalysed reaction is 2,2-dimethylpropanal + hydrogen cyanide = (2S)-2-hydroxy-3,3-dimethylbutanenitrile. It catalyses the reaction acrolein + hydrogen cyanide = (2S)-2-hydroxybut-3-enenitrile. It carries out the reaction (2E)-but-2-enal + hydrogen cyanide = (2S,3E)-2-hydroxypent-3-enenitrile. The enzyme catalyses (E)-hex-2-enal + hydrogen cyanide = (2S,3E)-2-hydroxyhept-3-enenitrile. The catalysed reaction is cyclohexanecarbaldehyde + hydrogen cyanide = (2S)-2-cyclohexyl-2-hydroxyacetonitrile. It catalyses the reaction benzaldehyde + hydrogen cyanide = (S)-mandelonitrile. It carries out the reaction 4-methoxybenzaldehyde + hydrogen cyanide = (2S)-2-hydroxy-2-(4-methoxyphenyl)acetonitrile. The enzyme catalyses piperonal + hydrogen cyanide = (2S)-2-(2H-1,3-benzodioxol-5-yl)-2-hydroxyacetonitrile. The catalysed reaction is formylthiophene + hydrogen cyanide = (2R)-2-hydroxy-2-(thiophen-2-yl)acetonitrile. It catalyses the reaction 3-formylthiophene + hydrogen cyanide = (2S)-2-hydroxy-2-(thiophen-3-yl)acetonitrile. It carries out the reaction furan-3-carbaldehyde + hydrogen cyanide = (2S)-2-(furan-3-yl)-2-hydroxyacetonitrile. Its function is as follows. Involved in cyanogenesis, the release of HCN from cyanogenic glycosides in injured tissues; the release of toxic HCN is believed to play a central role in the defense mechanism of plants against herbivores and microbial attack. Decomposes a variety of cyanohydrins (alpha-hydroxynitriles) into HCN and the corresponding aldehydes or ketones; two natural substrates are 2-hydroxy-2-methylpropanenitrile (acetone cyanohydrin) and 2-hydroxy-2-methylbutanenitrile (2-butanone cyanohydrin), but in vitro can also act on 2-hydroxy-2-methylpentanenitrile (2-pentanone cyanohydrin) and mandelonitrile. Is also able to catalyze the reverse reaction in vitro, leading to the stereospecific synthesis of aliphatic, aromatic, and heterocyclic cyanohydrins, important intermediates in the production of various agrochemicals or pharmaceuticals. The protein is (S)-hydroxynitrile lyase of Manihot esculenta (Cassava).